The primary structure comprises 110 residues: Secreted Ly-6/uPAR-related protein 1 (110 aa).

The signal sequence occupies residues Met1–Ala22. The 50-residue stretch at Arg24–Cys73 folds into the UPAR/Ly6 domain. Intrachain disulfides connect Cys25–Cys50, Cys28–Cys37, Cys43–Cys73, Cys77–Cys93, and Cys94–Cys99.

Homodimer. Interacts with PLAU. Interacts with CHRNA7. As to expression, expressed in skin, eye, whole lung, trachea, esophagus and stomach. Widely expressed in various tissues including spleen and thymus but not pancreas. Expressed in macrophages, dendritic cells, T and B cells. Expressed in lung specifically in ciliated bronchial epithelial cells (at protein level). Expression is decreased in lungs of asthmatic model mice. Expressed in the cornea.

Its subcellular location is the secreted. Functionally, has an antitumor activity. Was found to be a marker of late differentiation of the skin. Implicated in maintaining the physiological and structural integrity of the keratinocyte layers of the skin. In vitro down-regulates keratinocyte proliferation; the function may involve the proposed role as modulator of nicotinic acetylcholine receptors (nAChRs) activity. In vitro inhibits alpha-7-dependent nAChR currents in an allosteric manner. In T cells may be involved in regulation of intracellular Ca(2+) signaling. Seems to have a immunomodulatory function in the cornea. The function may implicate a possible role as a scavenger receptor for PLAU thereby blocking PLAU-dependent functions of PLAUR such as in cell migration and proliferation. This Mus musculus (Mouse) protein is Secreted Ly-6/uPAR-related protein 1 (Slurp1).